The primary structure comprises 280 residues: Pantothenate synthetase (280 aa).

30–37 (MGYLHEGH) provides a ligand contact to ATP. His-37 serves as the catalytic Proton donor. Gln-61 lines the (R)-pantoate pocket. Gln-61 serves as a coordination point for beta-alanine. Residue 147 to 150 (GQKD) participates in ATP binding. Position 153 (Gln-153) interacts with (R)-pantoate. ATP contacts are provided by residues Val-176 and 184–187 (MSSR).

Belongs to the pantothenate synthetase family. As to quaternary structure, homodimer.

The protein localises to the cytoplasm. It carries out the reaction (R)-pantoate + beta-alanine + ATP = (R)-pantothenate + AMP + diphosphate + H(+). Its pathway is cofactor biosynthesis; (R)-pantothenate biosynthesis; (R)-pantothenate from (R)-pantoate and beta-alanine: step 1/1. Catalyzes the condensation of pantoate with beta-alanine in an ATP-dependent reaction via a pantoyl-adenylate intermediate. In Thermotoga neapolitana, this protein is Pantothenate synthetase.